We begin with the raw amino-acid sequence, 266 residues long: Indole-3-glycerol phosphate synthase (266 aa).

Belongs to the TrpC family.

It carries out the reaction 1-(2-carboxyphenylamino)-1-deoxy-D-ribulose 5-phosphate + H(+) = (1S,2R)-1-C-(indol-3-yl)glycerol 3-phosphate + CO2 + H2O. It participates in amino-acid biosynthesis; L-tryptophan biosynthesis; L-tryptophan from chorismate: step 4/5. This chain is Indole-3-glycerol phosphate synthase, found in Opitutus terrae (strain DSM 11246 / JCM 15787 / PB90-1).